Here is a 247-residue protein sequence, read N- to C-terminus: Carboxy-S-adenosyl-L-methionine synthase (247 aa).

S-adenosyl-L-methionine contacts are provided by residues tyrosine 39, 64–66, 89–90, 117–118, asparagine 132, and arginine 199; these read GCS, DN, and DI.

Belongs to the class I-like SAM-binding methyltransferase superfamily. Cx-SAM synthase family. As to quaternary structure, homodimer.

The enzyme catalyses prephenate + S-adenosyl-L-methionine = carboxy-S-adenosyl-L-methionine + 3-phenylpyruvate + H2O. Catalyzes the conversion of S-adenosyl-L-methionine (SAM) to carboxy-S-adenosyl-L-methionine (Cx-SAM). This chain is Carboxy-S-adenosyl-L-methionine synthase, found in Salmonella paratyphi B (strain ATCC BAA-1250 / SPB7).